The primary structure comprises 449 residues: Probable glycine dehydrogenase (decarboxylating) subunit 1 (449 aa).

Belongs to the GcvP family. N-terminal subunit subfamily. In terms of assembly, the glycine cleavage system is composed of four proteins: P, T, L and H. In this organism, the P 'protein' is a heterodimer of two subunits.

The catalysed reaction is N(6)-[(R)-lipoyl]-L-lysyl-[glycine-cleavage complex H protein] + glycine + H(+) = N(6)-[(R)-S(8)-aminomethyldihydrolipoyl]-L-lysyl-[glycine-cleavage complex H protein] + CO2. Its function is as follows. The glycine cleavage system catalyzes the degradation of glycine. The P protein binds the alpha-amino group of glycine through its pyridoxal phosphate cofactor; CO(2) is released and the remaining methylamine moiety is then transferred to the lipoamide cofactor of the H protein. This Oceanobacillus iheyensis (strain DSM 14371 / CIP 107618 / JCM 11309 / KCTC 3954 / HTE831) protein is Probable glycine dehydrogenase (decarboxylating) subunit 1.